A 343-amino-acid polypeptide reads, in one-letter code: Uroporphyrinogen decarboxylase (343 aa).

Substrate is bound by residues 25–29 (RQAGR), aspartate 75, tyrosine 152, serine 207, and histidine 323.

Belongs to the uroporphyrinogen decarboxylase family. Homodimer.

It is found in the cytoplasm. It catalyses the reaction uroporphyrinogen III + 4 H(+) = coproporphyrinogen III + 4 CO2. It participates in porphyrin-containing compound metabolism; protoporphyrin-IX biosynthesis; coproporphyrinogen-III from 5-aminolevulinate: step 4/4. Its function is as follows. Catalyzes the decarboxylation of four acetate groups of uroporphyrinogen-III to yield coproporphyrinogen-III. The protein is Uroporphyrinogen decarboxylase of Jannaschia sp. (strain CCS1).